The primary structure comprises 149 residues: Calmodulin, striated muscle (149 aa).

4 consecutive EF-hand domains span residues 8-43, 44-79, 81-116, and 117-149; these read EQIA…LGQN, PTEA…KMRD, DSEE…LGEK, and LTDE…MTEK. Residues aspartate 21, aspartate 23, aspartate 25, cysteine 27, glutamate 32, aspartate 57, aspartate 59, serine 61, threonine 63, glutamate 68, aspartate 94, aspartate 96, asparagine 98, tyrosine 100, and glutamate 105 each coordinate Ca(2+). Lysine 116 is modified (N6,N6,N6-trimethyllysine). Aspartate 130, asparagine 132, aspartate 134, glutamine 136, and glutamate 141 together coordinate Ca(2+).

The protein belongs to the calmodulin family.

This Gallus gallus (Chicken) protein is Calmodulin, striated muscle (CCM1).